A 135-amino-acid polypeptide reads, in one-letter code: uncharacterized protein (135 aa).

Residues 68–135 (DEVDNYIRVF…KKESEDEDEL (68 aa)) are a coiled coil. The segment at 88-135 (EKIVGKPPKSTSAPDIDELEEEPDEETEEKSEEKTEKKKKESEDEDEL) is disordered. Residues 102–117 (DIDELEEEPDEETEEK) show a composition bias toward acidic residues. Residues 118 to 129 (SEEKTEKKKKES) are compositionally biased toward basic and acidic residues.

This is an uncharacterized protein from Acidianus hospitalis (AFV-1).